The sequence spans 127 residues: Aspartate 1-decarboxylase (127 aa).

The active-site Schiff-base intermediate with substrate; via pyruvic acid is S25. At S25 the chain carries Pyruvic acid (Ser). Position 57 (T57) interacts with substrate. Y58 (proton donor) is an active-site residue. 73 to 75 (GAA) serves as a coordination point for substrate.

The protein belongs to the PanD family. As to quaternary structure, heterooctamer of four alpha and four beta subunits. The cofactor is pyruvate. Is synthesized initially as an inactive proenzyme, which is activated by self-cleavage at a specific serine bond to produce a beta-subunit with a hydroxyl group at its C-terminus and an alpha-subunit with a pyruvoyl group at its N-terminus.

The protein localises to the cytoplasm. The enzyme catalyses L-aspartate + H(+) = beta-alanine + CO2. The protein operates within cofactor biosynthesis; (R)-pantothenate biosynthesis; beta-alanine from L-aspartate: step 1/1. Functionally, catalyzes the pyruvoyl-dependent decarboxylation of aspartate to produce beta-alanine. This chain is Aspartate 1-decarboxylase, found in Carboxydothermus hydrogenoformans (strain ATCC BAA-161 / DSM 6008 / Z-2901).